A 315-amino-acid polypeptide reads, in one-letter code: Rhomboid-related protein 4 (315 aa).

Over 1 to 21 the chain is Cytoplasmic; that stretch reads MQRRSRGINTGLILLLSQIFH. Residues 22-42 traverse the membrane as a helical segment; sequence VGINNIPPVTLATLALNIWFF. Topologically, residues 43–106 are extracellular; sequence LNPQKPLYSS…RRLGSRWFAY (64 aa). Residues 107-127 form a helical membrane-spanning segment; that stretch reads VITAFSVLTGVVYLLLQFAVA. Residues 128 to 138 are Cytoplasmic-facing; that stretch reads EFMDEPDFKRS. The chain crosses the membrane as a helical span at residues 139–157; the sequence is CAVGFSGVLFALKVLNNHY. Ser-144 acts as the Nucleophile in catalysis. Topologically, residues 158 to 180 are extracellular; it reads CPGGFVNILGFPVPNRFACWVEL. The chain crosses the membrane as a helical span at residues 181-201; that stretch reads VAIHLFSPGTSFAGHLAGILV. Residue His-195 is part of the active site. The Cytoplasmic portion of the chain corresponds to 202–315; sequence GLMYTQGPLK…RQRLHRFDSQ (114 aa). The segment at 269 to 284 is ubiquitin-binding domain (UBD); that stretch reads SEEEQLERALQASLWD. Residues 283-315 are disordered; the sequence is WDRGNTRNSPPPYGFHLSPEEMRRQRLHRFDSQ. Residues 300–315 show a composition bias toward basic and acidic residues; that stretch reads SPEEMRRQRLHRFDSQ. The interval 301–315 is VCP/p97-interacting motif (VIM); the sequence is PEEMRRQRLHRFDSQ.

Belongs to the peptidase S54 family. In terms of assembly, interacts (via C-terminal domain) with VCP. Interacts with ubiquitin and ubiquitinated proteins. Interacts with BIK and STEAP3. As to expression, expressed strongly in testis.

Its subcellular location is the endoplasmic reticulum membrane. It localises to the mitochondrion membrane. The enzyme catalyses Cleaves type-1 transmembrane domains using a catalytic dyad composed of serine and histidine that are contributed by different transmembrane domains.. Inhibited by aprotinin. Its function is as follows. Intramembrane-cleaving serine protease that cleaves single transmembrane or multi-pass membrane proteins in the hydrophobic plane of the membrane, luminal loops and juxtamembrane regions. Involved in regulated intramembrane proteolysis and the subsequent release of functional polypeptides from their membrane anchors. Functional component of endoplasmic reticulum-associated degradation (ERAD) for misfolded membrane proteins. Required for the degradation process of some specific misfolded endoplasmic reticulum (ER) luminal proteins. Participates in the transfer of misfolded proteins from the ER to the cytosol, where they are destroyed by the proteasome in a ubiquitin-dependent manner. Functions in BIK, MPZ, PKD1, PTCRA, RHO, STEAP3 and TRAC processing. Involved in the regulation of exosomal secretion; inhibits the TSAP6-mediated secretion pathway. Involved in the regulation of apoptosis; modulates BIK-mediated apoptotic activity. Also plays a role in the regulation of spermatogenesis; inhibits apoptotic activity in spermatogonia. This chain is Rhomboid-related protein 4 (RHBDD1), found in Homo sapiens (Human).